The primary structure comprises 74 residues: Arabinogalactan protein 20 (74 aa).

An N-terminal signal peptide occupies residues Met1–Ala26. Gln27 bears the Pyrrolidone carboxylic acid mark. Pro31, Pro33, and Pro35 each carry 4-hydroxyproline. Residues Pro31, Pro33, and Pro35 are each glycosylated (O-linked (Ara...) hydroxyproline). The GPI-anchor amidated serine moiety is linked to residue Ser37. The propeptide at Asp38–Phe74 is removed in mature form.

Belongs to the AG-peptide AGP family. Post-translationally, contains 4-hydroxyproline; hydroxylated on Pro-31, Pro-33 and Pro-35. O-glycosylated on hydroxyprolines; noncontiguous hydroxylproline residues are glycosylated with arabinogalactan.

The protein localises to the cell membrane. Its function is as follows. Proteoglycan that seems to be implicated in diverse developmental roles such as differentiation, cell-cell recognition, embryogenesis and programmed cell death. The protein is Arabinogalactan protein 20 of Arabidopsis thaliana (Mouse-ear cress).